Consider the following 438-residue polypeptide: Ribosomal protein uS12 methylthiotransferase RimO (438 aa).

The region spanning 1–115 (MKYFILSLGC…LDKLLADLGE (115 aa)) is the MTTase N-terminal domain. [4Fe-4S] cluster-binding residues include cysteine 10, cysteine 46, cysteine 78, cysteine 150, cysteine 154, and cysteine 157. In terms of domain architecture, Radical SAM core spans 136–366 (KSNEVYRYIK…MEVQQEISLN (231 aa)). The region spanning 369-437 (KALVGKKIPV…IYDLKGEFIN (69 aa)) is the TRAM domain.

Belongs to the methylthiotransferase family. RimO subfamily. [4Fe-4S] cluster is required as a cofactor.

It is found in the cytoplasm. The catalysed reaction is L-aspartate(89)-[ribosomal protein uS12]-hydrogen + (sulfur carrier)-SH + AH2 + 2 S-adenosyl-L-methionine = 3-methylsulfanyl-L-aspartate(89)-[ribosomal protein uS12]-hydrogen + (sulfur carrier)-H + 5'-deoxyadenosine + L-methionine + A + S-adenosyl-L-homocysteine + 2 H(+). In terms of biological role, catalyzes the methylthiolation of an aspartic acid residue of ribosomal protein uS12. The polypeptide is Ribosomal protein uS12 methylthiotransferase RimO (Carboxydothermus hydrogenoformans (strain ATCC BAA-161 / DSM 6008 / Z-2901)).